A 429-amino-acid polypeptide reads, in one-letter code: Glutamate-1-semialdehyde 2,1-aminomutase (429 aa).

Position 267 is an N6-(pyridoxal phosphate)lysine (lysine 267).

This sequence belongs to the class-III pyridoxal-phosphate-dependent aminotransferase family. HemL subfamily. Homodimer. The cofactor is pyridoxal 5'-phosphate.

It is found in the cytoplasm. It carries out the reaction (S)-4-amino-5-oxopentanoate = 5-aminolevulinate. Its pathway is porphyrin-containing compound metabolism; protoporphyrin-IX biosynthesis; 5-aminolevulinate from L-glutamyl-tRNA(Glu): step 2/2. The polypeptide is Glutamate-1-semialdehyde 2,1-aminomutase (Xanthomonas campestris pv. campestris (strain 8004)).